A 239-amino-acid polypeptide reads, in one-letter code: Tetratricopeptide repeat protein 9B (239 aa).

The tract at residues 1-54 (MQRGALSPVLMLSAAPEPPPRPPPALSPPGPGSAPRHGSARSGPAPEPSGGLAA) is disordered. Phosphoserine is present on residues serine 7 and serine 27. Positions 16–32 (PEPPPRPPPALSPPGPG) are enriched in pro residues. The stretch at 63–97 (AVAFKAEGQRCYREKKFREAIGKYHRALLQLKAAQ) is one TPR 1 repeat. A disordered region spans residues 98-121 (GARPGGLPTPSPGPTTSPGPARLS). A compositionally biased stretch (pro residues) spans 104-114 (LPTPSPGPTTS). The TPR 2 repeat unit spans residues 169 to 202 (FKATYRAGIAFYHLGDYARALRYLQEARSREPTD).

Belongs to the TTC9 family.

In Mus musculus (Mouse), this protein is Tetratricopeptide repeat protein 9B (Ttc9b).